We begin with the raw amino-acid sequence, 252 residues long: Imidazole glycerol phosphate synthase subunit HisF (252 aa).

Active-site residues include Asp11 and Asp130.

The protein belongs to the HisA/HisF family. As to quaternary structure, heterodimer of HisH and HisF.

Its subcellular location is the cytoplasm. It catalyses the reaction 5-[(5-phospho-1-deoxy-D-ribulos-1-ylimino)methylamino]-1-(5-phospho-beta-D-ribosyl)imidazole-4-carboxamide + L-glutamine = D-erythro-1-(imidazol-4-yl)glycerol 3-phosphate + 5-amino-1-(5-phospho-beta-D-ribosyl)imidazole-4-carboxamide + L-glutamate + H(+). It participates in amino-acid biosynthesis; L-histidine biosynthesis; L-histidine from 5-phospho-alpha-D-ribose 1-diphosphate: step 5/9. In terms of biological role, IGPS catalyzes the conversion of PRFAR and glutamine to IGP, AICAR and glutamate. The HisF subunit catalyzes the cyclization activity that produces IGP and AICAR from PRFAR using the ammonia provided by the HisH subunit. The chain is Imidazole glycerol phosphate synthase subunit HisF from Bacillus licheniformis (strain ATCC 14580 / DSM 13 / JCM 2505 / CCUG 7422 / NBRC 12200 / NCIMB 9375 / NCTC 10341 / NRRL NRS-1264 / Gibson 46).